The primary structure comprises 28 residues: Mast cell degranulating peptide (28 aa).

2 disulfide bridges follow: Cys2–Cys18 and Cys4–Cys22.

As to expression, expressed by the venom gland.

Its subcellular location is the secreted. In terms of biological role, mast cell degranulating peptide. The sequence is that of Mast cell degranulating peptide from Bombus pensylvanicus (American bumblebee).